We begin with the raw amino-acid sequence, 267 residues long: Corrinoid adenosyltransferase EutT (267 aa).

The a divalent metal cation site is built by Cys-80 and Cys-83.

It belongs to the Cob(I)alamin adenosyltransferase family. EutT subfamily. In terms of assembly, homodimer. Requires a divalent metal cation as cofactor.

It is found in the bacterial microcompartment. It catalyses the reaction 2 cob(II)alamin + reduced [electron-transfer flavoprotein] + 2 ATP + 2 H2O = 2 adenosylcob(III)alamin + oxidized [electron-transfer flavoprotein] + 2 phosphate + 2 diphosphate + 3 H(+). The catalysed reaction is 2 cob(II)inamide + reduced [electron-transfer flavoprotein] + 2 ATP + 2 H2O = 2 adenosylcob(III)inamide + oxidized [electron-transfer flavoprotein] + 2 phosphate + 2 diphosphate + 3 H(+). The protein operates within amine and polyamine degradation; ethanolamine degradation. In terms of biological role, converts cyanocobalamin (CN-B12) to adenosylcobalamin (AdoCbl), the inducer of the eut operon. Is not active on cobinamide nor other intermediates in the adenosylcobalamin synthetic pathway. Allows full induction of the eut operon. Can use ADP, CTP and dATP in place of ATP, and cobinamide in place of cobalamin, none are as efficiently used as ATP and cobalamin. Its function is as follows. Expression of the eut operon allows this bacteria to use ethanolamine (EA) as a carbon, nitrogen and energy source. It relies on cobalamin (vitamin B12) both as a cofactor for the ethanolamine ammonia-lyase (EAL) activity and to induce the operon. EA enhances bacterial survival in macrophages in a concentration-dependent manner, suggesting it is an important nutrient during infection. The polypeptide is Corrinoid adenosyltransferase EutT (Salmonella typhimurium (strain LT2 / SGSC1412 / ATCC 700720)).